Consider the following 232-residue polypeptide: Large ribosomal subunit protein uL1 (232 aa).

This sequence belongs to the universal ribosomal protein uL1 family. As to quaternary structure, part of the 50S ribosomal subunit.

In terms of biological role, binds directly to 23S rRNA. The L1 stalk is quite mobile in the ribosome, and is involved in E site tRNA release. Functionally, protein L1 is also a translational repressor protein, it controls the translation of the L11 operon by binding to its mRNA. This is Large ribosomal subunit protein uL1 from Ruegeria sp. (strain TM1040) (Silicibacter sp.).